A 571-amino-acid chain; its full sequence is Potassium-transporting ATPase potassium-binding subunit (571 aa).

12 helical membrane passes run 5-25 (GWMQIALYGAVVLALVRPLGG), 64-84 (LAYAGAMVLFNVAGFVLLYAL), 136-156 (GLTHQNFVSAASGMAVAVALI), 179-199 (LYVLLPLCTVLALFYVSQGMP), 220-240 (VGPVASQVAIKMLGTNGGGFF), 254-274 (LSNFLQMLSIFVIGAALTNVF), 285-305 (WAILTAMGLLFLAGVTVTYWA), 330-350 (FGIAASALFAVITTAASCGAV), 375-395 (IIGGVGAGLYGMLVFVVVAIF), 421-441 (MLGILCLPLMMLGFTAFATVV), 488-508 (LAIGMLVGRFFVKIPVLAIAG), and 527-547 (GGLFVGLLVGVVLIIGGLTFF).

Belongs to the KdpA family. As to quaternary structure, the system is composed of three essential subunits: KdpA, KdpB and KdpC.

The protein localises to the cell inner membrane. Part of the high-affinity ATP-driven potassium transport (or Kdp) system, which catalyzes the hydrolysis of ATP coupled with the electrogenic transport of potassium into the cytoplasm. This subunit binds the periplasmic potassium ions and delivers the ions to the membrane domain of KdpB through an intramembrane tunnel. The polypeptide is Potassium-transporting ATPase potassium-binding subunit (Methylorubrum extorquens (strain PA1) (Methylobacterium extorquens)).